Consider the following 728-residue polypeptide: Meiotic sister-chromatid recombination protein 3 (728 aa).

Disordered regions lie at residues 33 to 171, 236 to 261, 300 to 335, 363 to 403, 422 to 454, 495 to 514, and 561 to 728; these read QLSA…GRTQ, NETD…LNVE, PTHQ…EAEA, SDNA…VKSN, SAPH…ANTG, VGVS…QHYL, and YGYQ…KSSR. Low complexity predominate over residues 35–46; it reads SAAAASAASAAS. A compositionally biased stretch (polar residues) spans 48 to 58; the sequence is DRTNYSRSHSL. A phosphoserine mark is found at Ser57 and Ser64. The span at 80-93 shows a compositional bias: low complexity; sequence STSSAAPPTSRAAA. Composition is skewed to polar residues over residues 95–106, 118–132, and 140–171; these read QYSQKTYSLRSQ, YTTN…TSGA, and KNKS…GRTQ. A phosphoserine mark is found at Ser127, Ser151, and Ser155. The span at 251–261 shows a compositional bias: basic and acidic residues; the sequence is HLQDDSELNVE. Residues 309-326 are compositionally biased toward basic residues; the sequence is IHNKRKQASTTRRKKRPP. Residue Ser363 is modified to Phosphoserine. Polar residues-rich tracts occupy residues 363–373 and 385–403; these read SDNASAPLGSN and TLRS…VKSN. The segment covering 590 to 634 has biased composition (polar residues); it reads EGVTTAKPSSNEGVMTNPVVTDSPSPLQQQIDSTTASSNGQSQGN. Residues 635–646 show a composition bias toward low complexity; sequence VPTSAVASTTRT. Thr646 is subject to Phosphothreonine. Composition is skewed to polar residues over residues 654-668, 675-684, and 691-708; these read NLKS…QTPQ, DPTTSSTNEL, and MVTS…TQDP. Ser660 carries the post-translational modification Phosphoserine. The segment covering 711–728 has biased composition (basic residues); sequence KHKKSSFFTKLFKKKSSR.

It is found in the cell membrane. May be involved in the control of meiotic sister-chromatid recombination. This is Meiotic sister-chromatid recombination protein 3 (MSC3) from Saccharomyces cerevisiae (strain ATCC 204508 / S288c) (Baker's yeast).